We begin with the raw amino-acid sequence, 354 residues long: Protein-arginine kinase (354 aa).

A Phosphagen kinase C-terminal domain is found at 24 to 254 (IVLSSRIRLA…QQIIQQEKMA (231 aa)). Residues 27–31 (SSRIR), His92, Arg125, 176–180 (RASVM), and 207–212 (RGIYGE) each bind ATP. The RDXXRA motif of the pArg binding pocket involved in allosteric regulation signature appears at 337–342 (RDYRRA).

This sequence belongs to the ATP:guanido phosphotransferase family.

It catalyses the reaction L-arginyl-[protein] + ATP = N(omega)-phospho-L-arginyl-[protein] + ADP + H(+). With respect to regulation, appears to be allosterically activated by the binding of pArg-containing polypeptides to the pArg-binding pocket localized in the C-terminal domain of McsB. In terms of biological role, catalyzes the specific phosphorylation of arginine residues in a large number of proteins. Is part of the bacterial stress response system. Protein arginine phosphorylation has a physiologically important role and is involved in the regulation of many critical cellular processes, such as protein homeostasis, motility, competence, and stringent and stress responses, by regulating gene expression and protein activity. This is Protein-arginine kinase from Bacillus cereus (strain AH187).